A 61-amino-acid polypeptide reads, in one-letter code: Small ribosomal subunit protein uS14B (61 aa).

Zn(2+) contacts are provided by cysteine 24, cysteine 27, cysteine 40, and cysteine 43.

It belongs to the universal ribosomal protein uS14 family. Zinc-binding uS14 subfamily. In terms of assembly, part of the 30S ribosomal subunit. Contacts proteins S3 and S10. Zn(2+) serves as cofactor.

Its function is as follows. Binds 16S rRNA, required for the assembly of 30S particles and may also be responsible for determining the conformation of the 16S rRNA at the A site. This chain is Small ribosomal subunit protein uS14B, found in Salinispora arenicola (strain CNS-205).